Here is a 72-residue protein sequence, read N- to C-terminus: DNA-directed RNA polymerase subunit Rpo10 (72 aa).

The Zn(2+) site is built by Cys7, Cys10, Cys54, and Cys55.

Belongs to the archaeal Rpo10/eukaryotic RPB10 RNA polymerase subunit family. In terms of assembly, part of the RNA polymerase complex. Requires Zn(2+) as cofactor.

Its subcellular location is the cytoplasm. It catalyses the reaction RNA(n) + a ribonucleoside 5'-triphosphate = RNA(n+1) + diphosphate. In terms of biological role, DNA-dependent RNA polymerase (RNAP) catalyzes the transcription of DNA into RNA using the four ribonucleoside triphosphates as substrates. The polypeptide is DNA-directed RNA polymerase subunit Rpo10 (Picrophilus torridus (strain ATCC 700027 / DSM 9790 / JCM 10055 / NBRC 100828 / KAW 2/3)).